Consider the following 403-residue polypeptide: Acetyl-CoA acetyltransferase IB (403 aa).

Catalysis depends on Cys-91, which acts as the Acyl-thioester intermediate. Active-site proton acceptor residues include His-353 and Cys-383. Positions 401–403 (AKL) match the Microbody targeting signal motif.

This sequence belongs to the thiolase-like superfamily. Thiolase family. As to quaternary structure, multimeric.

The protein resides in the peroxisome. The enzyme catalyses 2 acetyl-CoA = acetoacetyl-CoA + CoA. The protein operates within metabolic intermediate biosynthesis; (R)-mevalonate biosynthesis; (R)-mevalonate from acetyl-CoA: step 1/3. This is Acetyl-CoA acetyltransferase IB (PACTB) from Candida tropicalis (Yeast).